The primary structure comprises 316 residues: tRNA methyltransferase 10 homolog B (316 aa).

A coiled-coil region spans residues 73 to 98; that stretch reads EKIVAAKKSKRKQEKERRKANRVENS. Positions 77–96 are disordered; sequence AAKKSKRKQEKERRKANRVE. Residues 113-310 form the SAM-dependent MTase TRM10-type domain; sequence IKERLLEAKH…KGVSSRKGYV (198 aa).

This sequence belongs to the class IV-like SAM-binding methyltransferase superfamily. TRM10 family.

It carries out the reaction guanosine(9) in tRNA + S-adenosyl-L-methionine = N(1)-methylguanosine(9) in tRNA + S-adenosyl-L-homocysteine + H(+). Functionally, S-adenosyl-L-methionine-dependent guanine N(1)-methyltransferase that catalyzes the formation of N(1)-methylguanine at position 9 (m1G9) in tRNAs. Probably not able to catalyze formation of N(1)-methyladenine at position 9 (m1A9) in tRNAs. The sequence is that of tRNA methyltransferase 10 homolog B (TRMT10B) from Bos taurus (Bovine).